Here is a 156-residue protein sequence, read N- to C-terminus: MSKPGGHPRHGRRDGIDPVLRSRARRRALQAVYAWQISGGFAKQVIAQFAHEQAHEVADLAYFENLVEGVLTNRAELDTALTPYLDRGVEEVDAIERAVLRLAAYELLYRQDVPYRVVINEAIETAKRFGSEHGHTYVNGVLDRAAVEWRKVESGA.

The protein belongs to the NusB family.

Its function is as follows. Involved in transcription antitermination. Required for transcription of ribosomal RNA (rRNA) genes. Binds specifically to the boxA antiterminator sequence of the ribosomal RNA (rrn) operons. This is Transcription antitermination protein NusB from Xanthomonas oryzae pv. oryzae (strain MAFF 311018).